A 119-amino-acid polypeptide reads, in one-letter code: Large ribosomal subunit protein bL20 (119 aa).

This sequence belongs to the bacterial ribosomal protein bL20 family.

Functionally, binds directly to 23S ribosomal RNA and is necessary for the in vitro assembly process of the 50S ribosomal subunit. It is not involved in the protein synthesizing functions of that subunit. In Thermoanaerobacter sp. (strain X514), this protein is Large ribosomal subunit protein bL20.